Reading from the N-terminus, the 284-residue chain is Transcription factor lir-3 (284 aa).

Over residues 50–60 (EPRISRDELRE) the composition is skewed to basic and acidic residues. Positions 50-71 (EPRISRDELRETASSPVTFETR) are disordered. A C2H2-type zinc finger spans residues 224-247 (YKCKQCDYLDYRKSTMRKHTVSQH).

As to expression, expressed in FLP neurons.

It is found in the nucleus. Positively regulates the RNA polymerase III-associated transcription of small non-coding RNAs. The sequence is that of Transcription factor lir-3 from Caenorhabditis elegans.